Reading from the N-terminus, the 390-residue chain is 2-oxoisovalerate dehydrogenase subunit beta, mitochondrial (390 aa).

The N-terminal 48 residues, 1–48 (MAAVAARAGGLLWLRAAGAERRRCGLRCAALVQGFLQPGGEDTAQKRR), are a transit peptide targeting the mitochondrion. Y150 serves as a coordination point for thiamine diphosphate. Residues G176, L178, T179, C226, and D229 each contribute to the K(+) site. Residue K230 is modified to N6-acetyllysine. N231 contacts K(+). Residue K239 is modified to N6-acetyllysine.

Heterotetramer of 2 alpha/BCKDHA and 2 beta chains/BCKDHB that forms the branched-chain alpha-keto acid decarboxylase (E1) component of the BCKD complex. The branched-chain alpha-ketoacid dehydrogenase is a large complex composed of three major building blocks E1, E2 and E3. It is organized around E2, a 24-meric cubic core composed of DBT, to which are associated 6 to 12 copies of E1, and approximately 6 copies of the dehydrogenase E3, a DLD dimer. Requires thiamine diphosphate as cofactor.

It localises to the mitochondrion matrix. The catalysed reaction is N(6)-[(R)-lipoyl]-L-lysyl-[protein] + 3-methyl-2-oxobutanoate + H(+) = N(6)-[(R)-S(8)-2-methylpropanoyldihydrolipoyl]-L-lysyl-[protein] + CO2. Functionally, together with BCKDHA forms the heterotetrameric E1 subunit of the mitochondrial branched-chain alpha-ketoacid dehydrogenase (BCKD) complex. The BCKD complex catalyzes the multi-step oxidative decarboxylation of alpha-ketoacids derived from the branched-chain amino-acids valine, leucine and isoleucine producing CO2 and acyl-CoA which is subsequently utilized to produce energy. The E1 subunit catalyzes the first step with the decarboxylation of the alpha-ketoacid forming an enzyme-product intermediate. A reductive acylation mediated by the lipoylamide cofactor of E2 extracts the acyl group from the E1 active site for the next step of the reaction. The chain is 2-oxoisovalerate dehydrogenase subunit beta, mitochondrial from Mus musculus (Mouse).